A 209-amino-acid polypeptide reads, in one-letter code: Uracil phosphoribosyltransferase (209 aa).

5-phospho-alpha-D-ribose 1-diphosphate-binding positions include R79, R104, and 131 to 139 (DPMLATGGS). Uracil-binding positions include I194 and 199–201 (GDA). D200 contributes to the 5-phospho-alpha-D-ribose 1-diphosphate binding site.

The protein belongs to the UPRTase family. It depends on Mg(2+) as a cofactor.

It carries out the reaction UMP + diphosphate = 5-phospho-alpha-D-ribose 1-diphosphate + uracil. Its pathway is pyrimidine metabolism; UMP biosynthesis via salvage pathway; UMP from uracil: step 1/1. Its activity is regulated as follows. Allosterically activated by GTP. In terms of biological role, catalyzes the conversion of uracil and 5-phospho-alpha-D-ribose 1-diphosphate (PRPP) to UMP and diphosphate. The chain is Uracil phosphoribosyltransferase from Desulfitobacterium hafniense (strain DSM 10664 / DCB-2).